Here is a 970-residue protein sequence, read N- to C-terminus: Unconventional myosin-XIX (970 aa).

Positions 35 to 758 (YKLDDLTRVN…MLELLECGRA (724 aa)) constitute a Myosin motor domain. Residue 132-139 (GESGAGKT) participates in ATP binding. Residues 602–624 (LEQLLQVLHSTTPHYIRCIKPNS) are actin-binding. The residue at position 685 (serine 685) is a Phosphoserine. IQ domains are found at residues 759 to 779 (RVLEQCARCIQGGWRRHRHRE) and 783 to 812 (QWRAVMLIQAAIRSWLTRKHIQRLHAAATV). Positions 824–970 (MACLAAKELD…VTSSAFTGLG (147 aa)) are myMOMA region.

This sequence belongs to the TRAFAC class myosin-kinesin ATPase superfamily. Myosin family. Myosin is a hexamer of 2 heavy chains and 4 light chains: interacts with myosin light chains MYL9 and MYL12B. Widely expressed in multiple tissues and cell lines.

The protein localises to the mitochondrion outer membrane. Its subcellular location is the cytoplasm. The protein resides in the cytoskeleton. Actin-based motor molecule with ATPase activity that localizes to the mitochondrion outer membrane. Motor protein that moves towards the plus-end of actin filaments. Required for mitochondrial inheritance during mitosis. May be involved in mitochondrial transport or positioning. The chain is Unconventional myosin-XIX from Homo sapiens (Human).